The following is a 1066-amino-acid chain: Phosphatidylinositol 4-kinase PIK1 (1066 aa).

Residues 1 to 133 enclose the PIK helical domain; the sequence is MHKASSSKKS…GFQVARRVLN (133 aa). 2 positions are modified to phosphoserine: serine 10 and serine 236. Disordered regions lie at residues 218–240, 303–411, and 564–624; these read KKTS…PIDL, DGKN…KKAN, and NENR…LGDM. The span at 342 to 356 shows a compositional bias: acidic residues; that stretch reads NNEDETGGETEEDAD. 2 stretches are compositionally biased toward polar residues: residues 374-411 and 570-597; these read QPRT…KKAN and STLT…NEGL. At serine 384 the chain carries Phosphoserine. The residue at position 394 (threonine 394) is a Phosphothreonine. A phosphoserine mark is found at serine 396 and serine 592. Low complexity predominate over residues 598–609; sequence SSTSRSDSASTA. One can recognise a PI3K/PI4K catalytic domain in the interval 770 to 1049; it reads ATKKERIRKT…FLIGKSLGSI (280 aa). A G-loop region spans residues 776–782; that stretch reads IRKTSEY. Positions 915 to 923 are catalytic loop; it reads QVKDRHNGN. Residues 934–958 form an activation loop region; the sequence is HIDFGFMLSNSPGSVGFEAAPFKLT.

Belongs to the PI3/PI4-kinase family. Type III PI4K subfamily. As to quaternary structure, interacts with FRQ1.

The protein resides in the nucleus. The protein localises to the golgi apparatus. It is found in the trans-Golgi network. It catalyses the reaction a 1,2-diacyl-sn-glycero-3-phospho-(1D-myo-inositol) + ATP = a 1,2-diacyl-sn-glycero-3-phospho-(1D-myo-inositol 4-phosphate) + ADP + H(+). In terms of biological role, acts on phosphatidylinositol (PI) in the first committed step in the production of the second messenger inositol 1,4,5,-trisphosphate. PIK1 is part of a nuclear phosphoinositide cycle and could control cytokinesis through the actin cytoskeleton. Involved in the response to mating pheromone. The polypeptide is Phosphatidylinositol 4-kinase PIK1 (Saccharomyces cerevisiae (strain ATCC 204508 / S288c) (Baker's yeast)).